A 303-amino-acid chain; its full sequence is Diaminopimelate epimerase (303 aa).

The substrate site is built by asparagine 15, glutamine 47, and asparagine 67. Cysteine 76 serves as the catalytic Proton donor. Substrate is bound by residues 77 to 78 (GN), asparagine 163, asparagine 197, and 215 to 216 (ER). The active-site Proton acceptor is cysteine 224. A substrate-binding site is contributed by 225-226 (GS). The interval 278-303 (FDPATGEWSRDTQGLQGSGNADRGAA) is disordered.

The protein belongs to the diaminopimelate epimerase family. In terms of assembly, homodimer.

Its subcellular location is the cytoplasm. It carries out the reaction (2S,6S)-2,6-diaminopimelate = meso-2,6-diaminopimelate. Its pathway is amino-acid biosynthesis; L-lysine biosynthesis via DAP pathway; DL-2,6-diaminopimelate from LL-2,6-diaminopimelate: step 1/1. Functionally, catalyzes the stereoinversion of LL-2,6-diaminopimelate (L,L-DAP) to meso-diaminopimelate (meso-DAP), a precursor of L-lysine and an essential component of the bacterial peptidoglycan. The polypeptide is Diaminopimelate epimerase (Brucella abortus (strain S19)).